Consider the following 108-residue polypeptide: UPF0235 protein RB8260 (108 aa).

This sequence belongs to the UPF0235 family.

The chain is UPF0235 protein RB8260 from Rhodopirellula baltica (strain DSM 10527 / NCIMB 13988 / SH1).